Here is a 243-residue protein sequence, read N- to C-terminus: Nuclear ubiquitous casein and cyclin-dependent kinase substrate 1 (243 aa).

The interval methionine 1–aspartate 243 is disordered. The residue at position 13 (tyrosine 13) is a Phosphotyrosine. A phosphoserine mark is found at serine 14 and serine 19. Tyrosine 26 bears the Phosphotyrosine mark. Positions lysine 35–glycine 51 are enriched in basic residues. Phosphoserine occurs at positions 54, 58, 61, 73, 75, and 79. Residues lysine 64–glutamate 77 are compositionally biased toward basic and acidic residues. The span at glutamine 91–alanine 100 shows a compositional bias: low complexity. The segment covering valine 111–proline 124 has biased composition (acidic residues). Phosphoserine is present on residues serine 113, serine 130, serine 132, and serine 144. Acidic residues predominate over residues serine 132–aspartate 145. The span at serine 149–leucine 174 shows a compositional bias: basic residues. Phosphothreonine is present on threonine 179. Serine 181 is modified (phosphoserine). The segment covering alanine 197–lysine 206 has biased composition (basic and acidic residues). The residue at position 202 (threonine 202) is a Phosphothreonine. Phosphoserine occurs at positions 204, 214, 223, 229, 234, and 240. A compositionally biased stretch (acidic residues) spans glutamate 232–aspartate 243.

Does not interact with RAD51. In terms of processing, phosphorylated in an ATM-dependent manner in response to DNA damage. Phosphorylated by CDK1 and casein kinase.

Its subcellular location is the nucleus. The protein resides in the chromosome. In terms of biological role, chromatin-associated protein involved in DNA repair by promoting homologous recombination (HR). Binds double-stranded DNA (dsDNA) and secondary DNA structures, such as D-loop structures, but with less affinity than RAD51AP1. The polypeptide is Nuclear ubiquitous casein and cyclin-dependent kinase substrate 1 (NUCKS1) (Bos taurus (Bovine)).